Reading from the N-terminus, the 110-residue chain is Cell cycle protein GpsB (110 aa).

The stretch at 37-63 forms a coiled coil; sequence KDYTVYIALVKELQEENAKLKAKATSA. The interval 59-79 is disordered; it reads KATSAPASRPAYASATSEPSH. Low complexity predominate over residues 60–75; the sequence is ATSAPASRPAYASATS.

It belongs to the GpsB family. As to quaternary structure, forms polymers through the coiled coil domains. Interacts with PBP1, MreC and EzrA.

Its subcellular location is the cytoplasm. Divisome component that associates with the complex late in its assembly, after the Z-ring is formed, and is dependent on DivIC and PBP2B for its recruitment to the divisome. Together with EzrA, is a key component of the system that regulates PBP1 localization during cell cycle progression. Its main role could be the removal of PBP1 from the cell pole after pole maturation is completed. Also contributes to the recruitment of PBP1 to the division complex. Not essential for septum formation. This is Cell cycle protein GpsB from Streptococcus thermophilus (strain CNRZ 1066).